Here is a 136-residue protein sequence, read N- to C-terminus: MSARGKARNRALDVLFEAEQRSLSAFDVLRSRREKTDQIVNPYTLEIVEGVVSHQAAIDEFLETYSQGWTLERMPSVDRIILRIGTWELLYNDDVPDGVAVSEAVALAKTLSTDESPSFINGLLGRLQQLKPSLLA.

The protein belongs to the NusB family.

Functionally, involved in transcription antitermination. Required for transcription of ribosomal RNA (rRNA) genes. Binds specifically to the boxA antiterminator sequence of the ribosomal RNA (rrn) operons. In Arthrobacter sp. (strain FB24), this protein is Transcription antitermination protein NusB.